A 650-amino-acid chain; its full sequence is DNA gyrase subunit B (650 aa).

The Toprim domain occupies Asn-429 to Pro-543. The Mg(2+) site is built by Glu-435, Asp-508, and Asp-510.

This sequence belongs to the type II topoisomerase GyrB family. As to quaternary structure, heterotetramer, composed of two GyrA and two GyrB chains. In the heterotetramer, GyrA contains the active site tyrosine that forms a transient covalent intermediate with DNA, while GyrB binds cofactors and catalyzes ATP hydrolysis. It depends on Mg(2+) as a cofactor. Mn(2+) serves as cofactor. Requires Ca(2+) as cofactor.

The protein resides in the cytoplasm. The catalysed reaction is ATP-dependent breakage, passage and rejoining of double-stranded DNA.. In terms of biological role, a type II topoisomerase that negatively supercoils closed circular double-stranded (ds) DNA in an ATP-dependent manner to modulate DNA topology and maintain chromosomes in an underwound state. Negative supercoiling favors strand separation, and DNA replication, transcription, recombination and repair, all of which involve strand separation. Also able to catalyze the interconversion of other topological isomers of dsDNA rings, including catenanes and knotted rings. Type II topoisomerases break and join 2 DNA strands simultaneously in an ATP-dependent manner. The protein is DNA gyrase subunit B of Streptococcus pyogenes serotype M3 (strain ATCC BAA-595 / MGAS315).